Here is a 230-residue protein sequence, read N- to C-terminus: Ribonuclease 3 (230 aa).

The RNase III domain occupies 5-134; the sequence is EALLENSFNI…FLGALLLDKG (130 aa). Position 47 (E47) interacts with Mg(2+). The active site involves D51. Positions 120 and 123 each coordinate Mg(2+). The active site involves E123. The 70-residue stretch at 160–229 folds into the DRBM domain; the sequence is DYKTCLQELL…AKNALAQLSE (70 aa).

Belongs to the ribonuclease III family. As to quaternary structure, homodimer. Mg(2+) is required as a cofactor.

It is found in the cytoplasm. The catalysed reaction is Endonucleolytic cleavage to 5'-phosphomonoester.. Functionally, digests double-stranded RNA. Involved in the processing of primary rRNA transcript to yield the immediate precursors to the large and small rRNAs (23S and 16S). Processes some mRNAs, and tRNAs when they are encoded in the rRNA operon. Processes pre-crRNA and tracrRNA of type II CRISPR loci if present in the organism. This Streptococcus equi subsp. zooepidemicus (strain H70) protein is Ribonuclease 3.